We begin with the raw amino-acid sequence, 421 residues long: Immunoglobulin heavy constant epsilon (421 aa).

4 Ig-like domains span residues 5–97, 99–184, 201–301, and 310–410; these read PQLY…VNIT, PTLE…KVTS, PRGV…RSIT, and PEVY…KTIS. A disulfide bridge connects residues cysteine 23 and cysteine 75. N-linked (GlcNAc...) asparagine glycosylation is found at asparagine 43, asparagine 72, asparagine 84, asparagine 95, asparagine 166, asparagine 238, asparagine 261, asparagine 365, and asparagine 415. 3 cysteine pairs are disulfide-bonded: cysteine 121–cysteine 180, cysteine 226–cysteine 285, and cysteine 330–cysteine 392.

As to quaternary structure, the basic structural unit consists of two identical heavy chains and two identical light chains; disulfide-linked. N-terminal variable regions of the heavy and light chains form the antigen binding sites, whereas the C-terminal constant regions of the heavy chains interact with immune receptors to mediate effector functions.

It is found in the secreted. Its subcellular location is the cell membrane. Its function is as follows. Constant region of immunoglobulin heavy chains. Immunoglobulins, also known as antibodies, are membrane-bound or secreted glycoproteins produced by B lymphocytes. In the recognition phase of humoral immunity, the membrane-bound immunoglobulins serve as receptors which, upon binding of a specific antigen, trigger the clonal expansion and differentiation of B lymphocytes into immunoglobulins-secreting plasma cells. Secreted immunoglobulins mediate the effector phase of humoral immunity, which results in the elimination of bound antigens. The antigen binding site is formed by the variable domain of one heavy chain, together with that of its associated light chain. Thus, each immunoglobulin has two antigen binding sites with remarkable affinity for a particular antigen. The variable domains are assembled by a process called V-(D)-J rearrangement and can then be subjected to somatic hypermutations which, after exposure to antigen and selection, allow affinity maturation for a particular antigen. The polypeptide is Immunoglobulin heavy constant epsilon (Mus musculus (Mouse)).